Reading from the N-terminus, the 132-residue chain is D-ribose pyranase (132 aa).

Catalysis depends on His20, which acts as the Proton donor. Substrate-binding positions include Asp28, His98, and 120–122 (YAN).

Belongs to the RbsD / FucU family. RbsD subfamily. In terms of assembly, homodecamer.

It localises to the cytoplasm. The enzyme catalyses beta-D-ribopyranose = beta-D-ribofuranose. Its pathway is carbohydrate metabolism; D-ribose degradation; D-ribose 5-phosphate from beta-D-ribopyranose: step 1/2. Functionally, catalyzes the interconversion of beta-pyran and beta-furan forms of D-ribose. The sequence is that of D-ribose pyranase from Geobacillus thermodenitrificans (strain NG80-2).